The chain runs to 269 residues: Meiotic drive suppressor wtf5 (269 aa).

The disordered stretch occupies residues 1 to 65; sequence MKNNYTSLKS…NTHRENHSYG (65 aa). Residues 19–30 are compositionally biased toward basic and acidic residues; sequence KTDHEIDLEKGP. Helical transmembrane passes span 73–95, 110–132, and 206–228; these read LLII…VCYL, WTLF…YFYE, and WGLK…VFIA.

The protein belongs to the WTF family. As to quaternary structure, homomer. Interacts with other proteins that exhibit high sequence similarity.

The protein resides in the spore membrane. It is found in the vacuole membrane. Functionally, acts as a suppressor component of the dual wtf meiotic drive system, and can suppress but not confer meiotic drive by compatible poisons. Wtf meiotic drive systems promote unequal transmission of alleles from the parental zygote to progeny spores by encoding a poison and an antidote from the same locus; the poison is trans-acting and forms toxic aggregates in all spores within an ascus, wherease the antidote is spore-specific and targets aggregates for degradation by the vacuole. Meiotic drive by wtf systems therefore lead to poisoning of all progeny that do not inherit the dual poison/antidote allele, or express a compatible antidote. This is Meiotic drive suppressor wtf5 from Schizosaccharomyces pombe (strain 972 / ATCC 24843) (Fission yeast).